We begin with the raw amino-acid sequence, 235 residues long: Hydroxyacylglutathione hydrolase (235 aa).

Positions 53, 55, 57, 58, 109, 127, and 165 each coordinate Zn(2+).

It belongs to the metallo-beta-lactamase superfamily. Glyoxalase II family. In terms of assembly, monomer. Requires Zn(2+) as cofactor.

The catalysed reaction is an S-(2-hydroxyacyl)glutathione + H2O = a 2-hydroxy carboxylate + glutathione + H(+). It participates in secondary metabolite metabolism; methylglyoxal degradation; (R)-lactate from methylglyoxal: step 2/2. In terms of biological role, thiolesterase that catalyzes the hydrolysis of S-D-lactoyl-glutathione to form glutathione and D-lactic acid. This chain is Hydroxyacylglutathione hydrolase, found in Haemophilus ducreyi (strain 35000HP / ATCC 700724).